The chain runs to 260 residues: Small ribosomal subunit protein eS1 (260 aa).

Residues 1–18 show a composition bias toward basic residues; that stretch reads MAVGKNKRMSKGKKGGKK. Positions 1–20 are disordered; it reads MAVGKNKRMSKGKKGGKKKA.

The protein belongs to the eukaryotic ribosomal protein eS1 family. Component of the small ribosomal subunit. Mature ribosomes consist of a small (40S) and a large (60S) subunit. The 40S subunit contains about 33 different proteins and 1 molecule of RNA (18S). The 60S subunit contains about 49 different proteins and 3 molecules of RNA (25S, 5.8S and 5S).

Its subcellular location is the cytoplasm. The chain is Small ribosomal subunit protein eS1 from Ostreococcus lucimarinus (strain CCE9901).